The chain runs to 338 residues: DNA-directed RNA polymerase subunit alpha (338 aa).

The segment at 1–234 (MIHKNWAELI…DQLGIFVNFE (234 aa)) is alpha N-terminal domain (alpha-NTD). The interval 250-338 (FNPLLLKKVD…DLAKKFEDSF (89 aa)) is alpha C-terminal domain (alpha-CTD).

The protein belongs to the RNA polymerase alpha chain family. In terms of assembly, homodimer. The RNAP catalytic core consists of 2 alpha, 1 beta, 1 beta' and 1 omega subunit. When a sigma factor is associated with the core the holoenzyme is formed, which can initiate transcription.

The catalysed reaction is RNA(n) + a ribonucleoside 5'-triphosphate = RNA(n+1) + diphosphate. Its function is as follows. DNA-dependent RNA polymerase catalyzes the transcription of DNA into RNA using the four ribonucleoside triphosphates as substrates. In Roseobacter denitrificans (strain ATCC 33942 / OCh 114) (Erythrobacter sp. (strain OCh 114)), this protein is DNA-directed RNA polymerase subunit alpha.